A 65-amino-acid polypeptide reads, in one-letter code: UPF0434 protein Rpal_0270 (65 aa).

It belongs to the UPF0434 family.

This is UPF0434 protein Rpal_0270 from Rhodopseudomonas palustris (strain TIE-1).